Here is a 491-residue protein sequence, read N- to C-terminus: Probable malate:quinone oxidoreductase (491 aa).

This sequence belongs to the MQO family. The cofactor is FAD.

The enzyme catalyses (S)-malate + a quinone = a quinol + oxaloacetate. Its pathway is carbohydrate metabolism; tricarboxylic acid cycle; oxaloacetate from (S)-malate (quinone route): step 1/1. In Actinobacillus pleuropneumoniae serotype 7 (strain AP76), this protein is Probable malate:quinone oxidoreductase.